Reading from the N-terminus, the 1079-residue chain is Zn(2)-C6 fungal-type transcription factor FTF1a (1079 aa).

Positions 177 to 204 (CIACRRKKIRCSGEKPACKQCLHSCIPC) form a DNA-binding region, zn(2)-C6 fungal-type.

It localises to the nucleus. Its function is as follows. Zn(2)-C6 fungal-type transcription factor that has a role in the establishment of the fungus within the plant and/or the progress of the disease. Regulates the expression of virulence factors such as SIX1 and SIX6. This chain is Zn(2)-C6 fungal-type transcription factor FTF1a, found in Fusarium oxysporum f. sp. lycopersici (strain 4287 / CBS 123668 / FGSC 9935 / NRRL 34936) (Fusarium vascular wilt of tomato).